The primary structure comprises 529 residues: Calcium-dependent protein kinase 3 (529 aa).

Positions 1–73 (MGHRHSKSKS…GRILGRPMEE (73 aa)) are disordered. Gly-2 is lipidated: N-myristoyl glycine. The span at 39 to 53 (SGSGTVGSSGSGTGG) shows a compositional bias: gly residues. The Protein kinase domain maps to 78 to 336 (YEFGRELGRG…AAEVLNHPWI (259 aa)). ATP contacts are provided by residues 84–92 (LGRGQFGVT) and Lys-107. Asp-202 (proton acceptor) is an active-site residue. At Ser-242 the chain carries Phosphoserine. Positions 342–372 (ASDKPLDNAVLSRMKQFRAMNKLKKMALKVI) are autoinhibitory domain. 4 EF-hand domains span residues 379-414 (EEIIGLKEMFKSLDTDNNGIVTLEELRTGLPKLGSK), 415-450 (ISEAEIRQLMEAADMDGDGSIDYLEFISATMHMNRI), 451-485 (EREDHLYTAFQFFDNDNSGYITMEELELAMKKYNM), and 486-521 (GDDKSIKEIIAEVDTDRDGKINYEEFVAMMKKGNPE). Ca(2+)-binding residues include Asp-392, Asp-394, Asn-396, Glu-403, Asp-428, Asp-430, Asp-432, Ser-434, Glu-439, Asp-464, Asp-466, Ser-468, Tyr-470, Glu-475, Asp-499, Asp-501, Asp-503, Lys-505, and Glu-510.

The protein belongs to the protein kinase superfamily. Ser/Thr protein kinase family. CDPK subfamily. In terms of assembly, interacts with GHR1. Expressed in both guard cells and mesophyll cells.

It localises to the cytoplasm. Its subcellular location is the nucleus. The enzyme catalyses L-seryl-[protein] + ATP = O-phospho-L-seryl-[protein] + ADP + H(+). The catalysed reaction is L-threonyl-[protein] + ATP = O-phospho-L-threonyl-[protein] + ADP + H(+). Activated by calcium. Autophosphorylation may play an important role in the regulation of the kinase activity. In terms of biological role, may play a role in signal transduction pathways that involve calcium as a second messenger. Functions in abscisic acid (ABA) regulation of guard cell S-type anion- and Ca(2+)-permeable channels and stomatal closure. The protein is Calcium-dependent protein kinase 3 of Arabidopsis thaliana (Mouse-ear cress).